The primary structure comprises 572 residues: Proline--tRNA ligase (572 aa).

It belongs to the class-II aminoacyl-tRNA synthetase family. ProS type 1 subfamily. Homodimer.

It localises to the cytoplasm. It carries out the reaction tRNA(Pro) + L-proline + ATP = L-prolyl-tRNA(Pro) + AMP + diphosphate. Catalyzes the attachment of proline to tRNA(Pro) in a two-step reaction: proline is first activated by ATP to form Pro-AMP and then transferred to the acceptor end of tRNA(Pro). As ProRS can inadvertently accommodate and process non-cognate amino acids such as alanine and cysteine, to avoid such errors it has two additional distinct editing activities against alanine. One activity is designated as 'pretransfer' editing and involves the tRNA(Pro)-independent hydrolysis of activated Ala-AMP. The other activity is designated 'posttransfer' editing and involves deacylation of mischarged Ala-tRNA(Pro). The misacylated Cys-tRNA(Pro) is not edited by ProRS. The chain is Proline--tRNA ligase from Salmonella choleraesuis (strain SC-B67).